We begin with the raw amino-acid sequence, 141 residues long: Hemoglobin subunit alpha (141 aa).

The Globin domain occupies 1-141; the sequence is VLSSTDKSNV…VSTVLTSKYR (141 aa). A Phosphoserine modification is found at Ser3. Residues Lys7 and Lys11 each carry the N6-succinyllysine modification. Residue Lys16 is modified to N6-acetyllysine; alternate. Position 16 is an N6-succinyllysine; alternate (Lys16). Phosphotyrosine is present on Tyr24. Ser35 is modified (phosphoserine). Lys40 is subject to N6-succinyllysine. Residue His58 coordinates O2. His87 serves as a coordination point for heme b. Residue Ser102 is modified to Phosphoserine. A Phosphothreonine modification is found at Thr108. A phosphoserine mark is found at Ser124 and Ser131. Phosphothreonine is present on residues Thr134 and Thr137. The residue at position 138 (Ser138) is a Phosphoserine.

This sequence belongs to the globin family. Heterotetramer of two alpha chains and two beta chains. In terms of tissue distribution, red blood cells.

Functionally, involved in oxygen transport from the lung to the various peripheral tissues. Hemopressin acts as an antagonist peptide of the cannabinoid receptor CNR1. Hemopressin-binding efficiently blocks cannabinoid receptor CNR1 and subsequent signaling. This Pteropus vampyrus (Large flying fox) protein is Hemoglobin subunit alpha.